The sequence spans 1058 residues: SMC5-SMC6 complex localization factor protein 1 (1058 aa).

BRCT domains lie at 12 to 77 and 119 to 196; these read MTGF…IHSA and GAPG…GDFL. Positions 410–1058 are NSE5-like domain; mediates interaction with SLF2; the sequence is PRGVLNLIES…MMCRSVMEFS (649 aa). ANK repeat units follow at residues 806 to 836, 840 to 869, and 874 to 903; these read KGETALHRACINNQVEKLILLLSLPGIDINV, AGWTPLHEACNYGNTVCVQEILQRCPEVDL, and DGVTPLHDALSNGHVEIGKLLLQHGGPVLL. A Glycyl lysine isopeptide (Lys-Gly) (interchain with G-Cter in SUMO2) cross-link involves residue K931.

In terms of assembly, interacts (via N-terminus) with SLF2; this interaction links RAD18 to the SMC5-SMC6 complex. Interacts (via BRCT domains) with RAD18; this interaction occurs in a SLF2-independent manner. Interacts with SMC6. Interacts (via BRCT domains) with RAD18 (via C-terminus and phosphorylated form); this interaction is required for efficient repair of UV-induced DNA damage.

The protein resides in the nucleus. It is found in the cytoplasm. The protein localises to the cytoskeleton. It localises to the microtubule organizing center. Its subcellular location is the centrosome. Its function is as follows. Plays a role in the DNA damage response (DDR) pathway by regulating postreplication repair of UV-damaged DNA and genomic stability maintenance. The SLF1-SLF2 complex acts to link RAD18 with the SMC5-SMC6 complex at replication-coupled interstrand cross-links (ICL) and DNA double-strand breaks (DSBs) sites on chromatin during DNA repair in response to stalled replication forks. Promotes the recruitment of SLF2 and the SMC5-SMC6 complex to DNA lesions. This Homo sapiens (Human) protein is SMC5-SMC6 complex localization factor protein 1.